Reading from the N-terminus, the 802-residue chain is Aldehyde dehydrogenase family 16 member A1 (802 aa).

The disordered stretch occupies residues 513-554 (SLPSGPETGPSPAPPYGLFVRGRFQSPGTQSSRPIKDSSGKV).

This sequence belongs to the aldehyde dehydrogenase family. In terms of assembly, interacts with SPG21.

The polypeptide is Aldehyde dehydrogenase family 16 member A1 (Aldh16a1) (Rattus norvegicus (Rat)).